The following is a 259-amino-acid chain: Global transcriptional regulator CodY (259 aa).

The tract at residues 1-155 is GAF domain; sequence MNLLEKTRKI…GATVVGMEIL (155 aa). A DNA-binding region (H-T-H motif) is located at residues 203-222; sequence ASKIADRVGITRSVIVNALR. Serine 215 bears the Phosphoserine mark.

The protein belongs to the CodY family.

It localises to the cytoplasm. Its function is as follows. DNA-binding global transcriptional regulator which is involved in the adaptive response to starvation and acts by directly or indirectly controlling the expression of numerous genes in response to nutrient availability. During rapid exponential growth, CodY is highly active and represses genes whose products allow adaptation to nutrient depletion. This chain is Global transcriptional regulator CodY, found in Anoxybacillus flavithermus (strain DSM 21510 / WK1).